The primary structure comprises 428 residues: ORC1-type DNA replication protein 5 (428 aa).

ATP is bound by residues 62 to 66 (TGKSL), Tyr219, and Arg231.

Belongs to the CDC6/cdc18 family.

Involved in regulation of DNA replication. The polypeptide is ORC1-type DNA replication protein 5 (orc5) (Halobacterium salinarum (strain ATCC 700922 / JCM 11081 / NRC-1) (Halobacterium halobium)).